Consider the following 154-residue polypeptide: uncharacterized protein (154 aa).

It localises to the mitochondrion. This is an uncharacterized protein from Vicia faba (Broad bean).